The sequence spans 271 residues: HLPQVSSSLHSRAATSVVDLNGNEIQLHDMLSGHYLTTANAPVLESTALFNNNNNFNHDVVNGLNRDPSPTFPTKQAVKKDRHSKIYTSQGPRDRRVRLSIGIARKFFDLQEMLGFDKPSKTLDWLLTKSKTAIKELVQSKSTKSNSSSPCDDCEEVVSVDSENVTDHSKGKSLKANNKCKEAMDSHQAAAKESRAKARARARERTKEKMCIKQLNEAIVLRNHQFEVSGTREAFVHPVFGFHQQNYGNTSHENWDQSNFASQSNQLCAIL.

The tract at residues 64–85 is disordered; it reads LNRDPSPTFPTKQAVKKDRHSK. Positions 79–137 constitute a TCP domain; sequence KKDRHSKIYTSQGPRDRRVRLSIGIARKFFDLQEMLGFDKPSKTLDWLLTKSKTAIKEL. The 18-residue stretch at 192–209 folds into the R domain; the sequence is KESRAKARARARERTKEK.

It localises to the nucleus. Involved in the dorsovental asymmetry of flowers. Retards growth rate and reduces organ number in the dorsal region of flowers. The protein is Transcription factor CYCLOIDEA (CYC) of Antirrhinum linkianum (Snapdragon).